A 512-amino-acid polypeptide reads, in one-letter code: Acid-sensing ion channel 2 (512 aa).

The Cytoplasmic segment spans residues 1 to 37 (MDLKESPSEGSLQPSSIQIFANTSTLHGIRHIFVYGP). Ser8 and Ser11 each carry phosphoserine. The chain crosses the membrane as a helical span at residues 38 to 58 (LTIRRVLWAVAFVGSLGLLLV). Residues 59 to 427 (ESSERVSYYF…EQKKAYEVAA (369 aa)) are Extracellular-facing. Disulfide bonds link Cys92-Cys193, Cys289-Cys364, Cys307-Cys360, Cys311-Cys358, Cys320-Cys342, and Cys322-Cys334. 2 N-linked (GlcNAc...) asparagine glycosylation sites follow: Asn365 and Asn392. A helical membrane pass occupies residues 428–448 (LLGDIGGQMGLFIGASLLTIL). Residues 441–443 (GAS) carry the GAS motif; ion selectivity filter motif. Residues 449 to 512 (ELFDYIYELI…ALGTLEEIAC (64 aa)) lie on the Cytoplasmic side of the membrane.

It belongs to the amiloride-sensitive sodium channel (TC 1.A.6) family. ASIC2 subfamily. Can form homotrimers. Heterotrimer; forms functional heterotrimers producing channel with different properties. Forms heterotrimers with ASIC1; while ASIC1 determines current amplitude, ASIC2 influences the properties of the current. Forms heterotrimers with ASIC3; resulting in channels with distinct properties. Interacts with STOM; STOM regulates the gating of ASIC2-containing channels. Interacts with PICK1; promotes ASIC3 phosphorylation by PKC and activation of ASIC2/ASIC3 heterotrimers. Expressed in sciatic nerve and dorsal root ganglion (DRG) (at protein level). Both isoforms display the same expression pattern except in DRG where isoform 2 is more abundantly expressed. Widely distributed throughout the brain. Highly expressed in the main olfactory bulb, neo- and allo-cortical regions, hippocampal formation, habenula, basolateral amygdaloid nuclei, and cerebellum. In the olfactory system, expressed in the glomerular cell layer, the internal granular layer, and the mitral and internal plexiform cell layers. Within the glomerular layer, restricted to the periglomerular cells. In the neocortex, strongly expressed in the large pyramidal neurons in all cortical layers as well as in the oligo-, astro-, or micro-glia cells. In the hippocampal formation, expressed in dentate granule cells and hilar neurons, as well as in pyramidal cells of CA1-CA3 subfields. Expressed in stratum oriens and radiatum of all subfields. Within the thalamus, expressed moderately in the medial and lateral habenula. In the cerebellar cortex expressed in Purkinje cells and granule cells. Expressed at low levels in choroid plexus.

It is found in the cell membrane. The enzyme catalyses Na(+)(in) = Na(+)(out). It catalyses the reaction K(+)(in) = K(+)(out). It carries out the reaction Li(+)(in) = Li(+)(out). With respect to regulation, inhibited by the diuretic drug amiloride. Inhibited by gadolinium ions, the heterotrimer with ASIC3 being more sensitive. Zn(2+) potentiates the acid activation of ASIC2-containing homomeric and heteromeric channels. The snake venom mambalgin-1 and mambalgin-2 inhibit the homotrimers composed of ASIC1 and ASIC2 and have strong analgesic effects. Functionally, forms pH-gated trimeric sodium channels that act as postsynaptic excitatory sensors in the nervous system. Upon extracellular acidification, these channels generate rapid, transient inward currents that fully desensitize. Highly selective for sodium, they are permeable to other cations. By forming heterotrimeric channels with ASIC1, could contribute to synaptic plasticity, learning, and memory. Additionally, as acid sensors at nerve terminals, plays a role in mechanosensation and phototransduction. In terms of biological role, has no pH-gated sodium channel activity per se but can associate with other ASICs to produce functional channels with specific properties. The polypeptide is Acid-sensing ion channel 2 (Rattus norvegicus (Rat)).